The following is a 636-amino-acid chain: p-hydroxybenzoate-m-hydroxylase (636 aa).

Residues 11 to 40, 242 to 244, Tyr290, and Asp311 contribute to the FAD site; these read DIVIVGAGPVGILLSLCMSRWGYKVKHIDN and RLY. The helical transmembrane segment at 12 to 33 threads the bilayer; the sequence is IVIVGAGPVGILLSLCMSRWGY. Asn573 carries N-linked (GlcNAc...) asparagine glycosylation.

It belongs to the PheA/TfdB FAD monooxygenase family. FAD is required as a cofactor.

It is found in the membrane. The catalysed reaction is 4-hydroxybenzoate + NADH + O2 + H(+) = 3,4-dihydroxybenzoate + NAD(+) + H2O. The enzyme catalyses 4-hydroxybenzoate + NADPH + O2 + H(+) = 3,4-dihydroxybenzoate + NADP(+) + H2O. Functionally, FAD-dependent monooxygenase; part of the benzoic acid degradation pathway also known as the protocatechuic acid pathway. Benzoic acid debradation begins with the conversion of benzoic acid into 4-hydroxybenzoic acid through hydroxylation by the benzoate-4-monooxygenase bphA, and its partner NADPH-cytochrome P450 reductase cprA which act as a mediator in electron donation from NADPH. 4-Hydroxybenzoic acid is then converted into 3,4-dihydroxybenzoic acid (also called protocatechuic acid) by the p-hydroxybenzoate-m-hydroxylase phhA. Protocatechuic acid is converted into 3-carboxy-cis,cis-muconic acid by the intradiol ring-cleavage dioxygenase prcA, which is further metabolized through the 3-oxoadipate pathway to finally enter the tricarboxylic acid cycle (TCA). This is p-hydroxybenzoate-m-hydroxylase from Emericella nidulans (strain FGSC A4 / ATCC 38163 / CBS 112.46 / NRRL 194 / M139) (Aspergillus nidulans).